The chain runs to 1004 residues: Protein CHUP1, chloroplastic (1004 aa).

Residues 1–25 (MFVRIGFVVAASIAAVTVKRLNVKP) are required for chloroplast localization. Residues 22 to 63 (NVKPSKPSKPSDNGEGGDKEQSVDPDYNLNDKNLQEEEEEEE) form a disordered region. Positions 123–341 (EMAYNDGELE…KQVEGLQMNR (219 aa)) form a coiled coil. A leucine-zipper 1 region spans residues 269 to 290 (LEVQVMELKRKNRELQHEKREL). 4 disordered regions span residues 398 to 482 (GSER…SMNK), 504 to 536 (FGQVDQESPGTPETPNLPRIRTQQQASSPGEGL), 612 to 718 (TATG…GNKV), and 736 to 755 (SKKEGAPSLISSGTGNSSAA). Phosphoserine is present on serine 399. The segment covering 409 to 419 (ESNYSQPSSPG) has biased composition (polar residues). The span at 427–439 (SMDSSTSRFSSFS) shows a compositional bias: low complexity. Composition is skewed to polar residues over residues 504–517 (FGQVDQESPGTPET) and 612–624 (TATGDQSNESNES). A compositionally biased stretch (pro residues) spans 670–706 (ARPPLPGGGPPPPPPPPGGGPPPPPGGGPPPPPPPPG). A compositionally biased stretch (polar residues) spans 744-755 (LISSGTGNSSAA). The tract at residues 802–823 (LLAFVSWLDEELSFLVDERAVL) is leucine-zipper 2. The segment at 979–1004 (RSRAKTESGDNNNNNNNNSNEEESVN) is disordered.

As to expression, expressed in cauline leaves, rosette leaves, stems and flowers, but not in roots.

It localises to the plastid. Its subcellular location is the chloroplast outer membrane. Required for the positioning and movement of chloroplasts. Interacts with profilin and actin independent of its polymerization status. Regulates chloroplast localization by anchoring chloroplasts to the plasma membrane and forming a bridge to the actin cytoskeleton. The chain is Protein CHUP1, chloroplastic (CHUP1) from Arabidopsis thaliana (Mouse-ear cress).